The sequence spans 754 residues: DNA repair protein RAD4 (754 aa).

Residues 23–51 are disordered; the sequence is EKAPLSRRRRVRRKNQPLPDAKKKFKTGL. The span at 27 to 37 shows a compositional bias: basic residues; that stretch reads LSRRRRVRRKN. The DNA-binding element occupies 250-269; that stretch reads DFLRAVSKGHGDPDISVQGF. The disordered stretch occupies residues 701 to 754; sequence IANHEARPYSEPSEPEDSLDYVSVDKAEESATDDDVGEDYSDFMKELEMSEESD. The segment covering 730-741 has biased composition (acidic residues); the sequence is SATDDDVGEDYS.

It belongs to the XPC family.

The protein localises to the cytoplasm. It localises to the nucleus. In terms of biological role, involved in nucleotide excision repair of DNA damaged with UV light, bulky adducts, or cross-linking agents. The sequence is that of DNA repair protein RAD4 (RAD4) from Saccharomyces cerevisiae (strain ATCC 204508 / S288c) (Baker's yeast).